Reading from the N-terminus, the 448-residue chain is Chromosomal replication initiator protein DnaA (448 aa).

The interval 1–93 is domain I, interacts with DnaA modulators; sequence MEQIVSSLWS…KPTEQNLSAS (93 aa). The tract at residues 94–110 is domain II; that stretch reads STNKEELTQDTVHKFKT. The tract at residues 111-328 is domain III, AAA+ region; sequence GLNGRLTFDN…GAINRVSAWC (218 aa). The ATP site is built by G156, G158, K159, and T160. The interval 329-448 is domain IV, binds dsDNA; it reads NFTKRQITID…YTNLTRKLSS (120 aa).

The protein belongs to the DnaA family. In terms of assembly, oligomerizes as a right-handed, spiral filament on DNA at oriC.

It localises to the cytoplasm. Plays an essential role in the initiation and regulation of chromosomal replication. ATP-DnaA binds to the origin of replication (oriC) to initiate formation of the DNA replication initiation complex once per cell cycle. Binds the DnaA box (a 9 base pair repeat at the origin) and separates the double-stranded (ds)DNA. Forms a right-handed helical filament on oriC DNA; dsDNA binds to the exterior of the filament while single-stranded (ss)DNA is stabiized in the filament's interior. The ATP-DnaA-oriC complex binds and stabilizes one strand of the AT-rich DNA unwinding element (DUE), permitting loading of DNA polymerase. After initiation quickly degrades to an ADP-DnaA complex that is not apt for DNA replication. Binds acidic phospholipids. In Haemophilus ducreyi (strain 35000HP / ATCC 700724), this protein is Chromosomal replication initiator protein DnaA.